The chain runs to 128 residues: Transcription antitermination protein NusB (128 aa).

Belongs to the NusB family.

In terms of biological role, involved in transcription antitermination. Required for transcription of ribosomal RNA (rRNA) genes. Binds specifically to the boxA antiterminator sequence of the ribosomal RNA (rrn) operons. The protein is Transcription antitermination protein NusB of Staphylococcus haemolyticus (strain JCSC1435).